The primary structure comprises 419 residues: Histidine--tRNA ligase (419 aa).

The protein belongs to the class-II aminoacyl-tRNA synthetase family.

The protein localises to the cytoplasm. The catalysed reaction is tRNA(His) + L-histidine + ATP = L-histidyl-tRNA(His) + AMP + diphosphate + H(+). The protein is Histidine--tRNA ligase of Pyrobaculum aerophilum (strain ATCC 51768 / DSM 7523 / JCM 9630 / CIP 104966 / NBRC 100827 / IM2).